The following is a 267-amino-acid chain: Orotidine 5'-phosphate decarboxylase (267 aa).

Residue serine 2 is modified to N-acetylserine. Residues aspartate 37, 59–61, and 91–100 contribute to the substrate site; these read KTH and DRKFADIGNT. Lysine 93 serves as the catalytic Proton donor. Residues lysine 93 and lysine 209 each participate in a glycyl lysine isopeptide (Lys-Gly) (interchain with G-Cter in ubiquitin) cross-link. Substrate is bound by residues tyrosine 217 and arginine 235. Lysine 253 participates in a covalent cross-link: Glycyl lysine isopeptide (Lys-Gly) (interchain with G-Cter in ubiquitin).

Belongs to the OMP decarboxylase family.

The catalysed reaction is orotidine 5'-phosphate + H(+) = UMP + CO2. It functions in the pathway pyrimidine metabolism; UMP biosynthesis via de novo pathway; UMP from orotate: step 2/2. The protein is Orotidine 5'-phosphate decarboxylase (URA3) of Saccharomyces cerevisiae (strain ATCC 204508 / S288c) (Baker's yeast).